The primary structure comprises 224 residues: tRNA pseudouridine synthase B (224 aa).

D46 acts as the Nucleophile in catalysis.

This sequence belongs to the pseudouridine synthase TruB family. Type 1 subfamily.

The enzyme catalyses uridine(55) in tRNA = pseudouridine(55) in tRNA. Its function is as follows. Responsible for synthesis of pseudouridine from uracil-55 in the psi GC loop of transfer RNAs. This is tRNA pseudouridine synthase B from Methylococcus capsulatus (strain ATCC 33009 / NCIMB 11132 / Bath).